The primary structure comprises 209 residues: Mitochondrial import inner membrane translocase subunit Tim23 (209 aa).

3 helical membrane passes run 73–93 (FELA…FGAM), 125–145 (ALWA…GVII), and 172–194 (GGLR…YALY).

Belongs to the Tim17/Tim22/Tim23 family. In terms of assembly, component of the TIM23 complex at least composed of TIMM23, TIMM17 (TIMM17A or TIMM17B) and TIMM50; within this complex, directly interacts with TIMM50. The complex interacts with the TIMM44 component of the PAM complex and with DNAJC15. Upon mitochondrial depolarization, interacts with PINK1; the interaction is required for PINK1 accumulation at the outer mitochondrial membrane, kinase activation by autophosphorylation and PRKN recruitement to mitochondria.

It localises to the mitochondrion inner membrane. Essential component of the TIM23 complex, a complex that mediates the translocation of transit peptide-containing proteins across the mitochondrial inner membrane. Has a role in the activation of stress-induced mitophagy by protecting PINK1 from OMA1-mediated degradation and facilitating its accumulation at the outer mitochondrial membrane in response to depolarization. The polypeptide is Mitochondrial import inner membrane translocase subunit Tim23 (TIMM23) (Pongo abelii (Sumatran orangutan)).